The primary structure comprises 79 residues: Major outer membrane lipoprotein Lpp 3 (79 aa).

The first 21 residues, 1–21, serve as a signal peptide directing secretion; sequence MNRTNKLILGAVVLGSALLAG. A lipid anchor (N-palmitoyl cysteine) is attached at cysteine 22. Residue cysteine 22 is the site of S-diacylglycerol cysteine attachment. 2 consecutive repeats follow at residues 25–35 and 39–49; these read NAKIDQLSSDV and SAKVDQLSNDV. A coiled-coil region spans residues 28-76; the sequence is IDQLSSDVQTLSAKVDQLSNDVNAMRSDVQAAKDDAARANQRLDNKVLR. At lysine 79 the chain carries N6-murein peptidoglycan lysine.

The protein belongs to the Lpp family. Homotrimer.

It is found in the cell outer membrane. Its subcellular location is the secreted. It localises to the cell wall. In terms of biological role, a highly abundant outer membrane lipoprotein that controls the distance between the inner and outer membranes. The only protein known to be covalently linked to the peptidoglycan network (PGN). Also non-covalently binds the PGN. The link between the cell outer membrane and PGN contributes to maintenance of the structural and functional integrity of the cell envelope, and maintains the correct distance between the PGN and the outer membrane. This Salmonella paratyphi A (strain ATCC 9150 / SARB42) protein is Major outer membrane lipoprotein Lpp 3.